Here is a 317-residue protein sequence, read N- to C-terminus: Apolipoprotein E (317 aa).

Positions methionine 1 to alanine 18 are cleaved as a signal peptide. A run of 8 repeats spans residues threonine 80 to serine 101, proline 102 to glycine 123, alanine 124 to glycine 145, glutamine 146 to leucine 167, arginine 168 to glutamate 189, arginine 190 to alanine 211, threonine 212 to arginine 233, and alanine 234 to alanine 255. The tract at residues threonine 80 to alanine 255 is 8 X 22 AA approximate tandem repeats. Methionine 143 bears the Methionine sulfoxide mark. Phosphoserine is present on serine 147. An LDL and other lipoprotein receptors binding region spans residues histidine 158 to arginine 168. Position 162 to 165 (leucine 162 to arginine 165) interacts with heparin. The interval alanine 210–methionine 290 is lipid-binding and lipoprotein association. Residue glycine 229 to methionine 236 coordinates heparin. The homooligomerization stretch occupies residues glutamine 266–histidine 317. The interval arginine 278–methionine 290 is specificity for association with VLDL.

It belongs to the apolipoprotein A1/A4/E family. In terms of assembly, homotetramer. May interact with ABCA1; functionally associated with ABCA1 in the biogenesis of HDLs. May interact with APP/A4 amyloid-beta peptide; the interaction is extremely stable in vitro but its physiological significance is unclear. May interact with MAPT. May interact with MAP2. In the cerebrospinal fluid, interacts with secreted SORL1. Interacts with PMEL; this allows the loading of PMEL luminal fragment on ILVs to induce fibril nucleation. Post-translationally, APOE exists as multiple glycosylated and sialylated glycoforms within cells and in plasma. The extent of glycosylation and sialylation are tissue and context specific. Glycated in plasma VLDL. In terms of processing, phosphorylated by FAM20C in the extracellular medium.

It is found in the secreted. The protein localises to the extracellular space. It localises to the extracellular matrix. Its subcellular location is the extracellular vesicle. The protein resides in the endosome. It is found in the multivesicular body. APOE is an apolipoprotein, a protein associating with lipid particles, that mainly functions in lipoprotein-mediated lipid transport between organs via the plasma and interstitial fluids. APOE is a core component of plasma lipoproteins and is involved in their production, conversion and clearance. Apolipoproteins are amphipathic molecules that interact both with lipids of the lipoprotein particle core and the aqueous environment of the plasma. As such, APOE associates with chylomicrons, chylomicron remnants, very low density lipoproteins (VLDL) and intermediate density lipoproteins (IDL) but shows a preferential binding to high-density lipoproteins (HDL). It also binds a wide range of cellular receptors including the LDL receptor/LDLR, the LDL receptor-related proteins LRP1, LRP2 and LRP8 and the very low-density lipoprotein receptor/VLDLR that mediate the cellular uptake of the APOE-containing lipoprotein particles. Finally, APOE also has a heparin-binding activity and binds heparan-sulfate proteoglycans on the surface of cells, a property that supports the capture and the receptor-mediated uptake of APOE-containing lipoproteins by cells. A main function of APOE is to mediate lipoprotein clearance through the uptake of chylomicrons, VLDLs, and HDLs by hepatocytes. APOE is also involved in the biosynthesis by the liver of VLDLs as well as their uptake by peripheral tissues ensuring the delivery of triglycerides and energy storage in muscle, heart and adipose tissues. By participating in the lipoprotein-mediated distribution of lipids among tissues, APOE plays a critical role in plasma and tissues lipid homeostasis. APOE is also involved in two steps of reverse cholesterol transport, the HDLs-mediated transport of cholesterol from peripheral tissues to the liver, and thereby plays an important role in cholesterol homeostasis. First, it is functionally associated with ABCA1 in the biogenesis of HDLs in tissues. Second, it is enriched in circulating HDLs and mediates their uptake by hepatocytes. APOE also plays an important role in lipid transport in the central nervous system, regulating neuron survival and sprouting. The sequence is that of Apolipoprotein E (APOE) from Theropithecus gelada (Gelada baboon).